The sequence spans 623 residues: Laccase-1 (623 aa).

A signal peptide spans 1–22 (MKTFTSALALVVGMLAPGAVVA). Residues 23–50 (APPSTPAQRDLVELREARQEGGKDLRPR) constitute a propeptide that is removed on maturation. Cysteines 54 and 62 form a disulfide. Residues Asn-89 and Asn-138 are each glycosylated (N-linked (GlcNAc...) asparagine). Positions 143, 145, 188, and 190 each coordinate Cu cation. 2 disulfide bridges follow: Cys-164–Cys-590 and Cys-348–Cys-382. 4 N-linked (GlcNAc...) asparagine glycosylation sites follow: Asn-251, Asn-266, Asn-294, and Asn-339. 2 N-linked (GlcNAc...) asparagine glycosylation sites follow: Asn-426 and Asn-446. Residues His-481, His-484, His-486, His-552, Cys-553, His-554, and His-558 each coordinate Cu cation. The propeptide occupies 610–623 (KRRRWVEESEWLVR).

This sequence belongs to the multicopper oxidase family. Monomer. It depends on Cu cation as a cofactor. In terms of tissue distribution, secreted protein; extracellular space.

The enzyme catalyses 4 hydroquinone + O2 = 4 benzosemiquinone + 2 H2O. Functionally, lignin degradation and detoxification of lignin-derived products. The chain is Laccase-1 (LAC1) from Melanocarpus albomyces.